The following is a 176-amino-acid chain: NAD(P)H-quinone oxidoreductase subunit 6, chloroplastic (176 aa).

5 helical membrane-spanning segments follow: residues 10–30 (FLLV…VLLP), 32–52 (PIYS…FYIL), 61–81 (AQLL…VMFM), 92–112 (LWTV…ISLI), and 152–172 (FFLP…GAIA).

The protein belongs to the complex I subunit 6 family. NDH is composed of at least 16 different subunits, 5 of which are encoded in the nucleus.

It localises to the plastid. The protein resides in the chloroplast thylakoid membrane. It carries out the reaction a plastoquinone + NADH + (n+1) H(+)(in) = a plastoquinol + NAD(+) + n H(+)(out). The catalysed reaction is a plastoquinone + NADPH + (n+1) H(+)(in) = a plastoquinol + NADP(+) + n H(+)(out). In terms of biological role, NDH shuttles electrons from NAD(P)H:plastoquinone, via FMN and iron-sulfur (Fe-S) centers, to quinones in the photosynthetic chain and possibly in a chloroplast respiratory chain. The immediate electron acceptor for the enzyme in this species is believed to be plastoquinone. Couples the redox reaction to proton translocation, and thus conserves the redox energy in a proton gradient. The sequence is that of NAD(P)H-quinone oxidoreductase subunit 6, chloroplastic (ndhG) from Nicotiana tabacum (Common tobacco).